Reading from the N-terminus, the 361-residue chain is Peptide chain release factor 1 (361 aa).

The residue at position 240 (glutamine 240) is an N5-methylglutamine.

This sequence belongs to the prokaryotic/mitochondrial release factor family. In terms of processing, methylated by PrmC. Methylation increases the termination efficiency of RF1.

It is found in the cytoplasm. Its function is as follows. Peptide chain release factor 1 directs the termination of translation in response to the peptide chain termination codons UAG and UAA. The sequence is that of Peptide chain release factor 1 from Mycobacterium leprae (strain Br4923).